A 309-amino-acid chain; its full sequence is Protein FdhE (309 aa).

It belongs to the FdhE family.

The protein resides in the cytoplasm. Functionally, necessary for formate dehydrogenase activity. This chain is Protein FdhE, found in Escherichia coli O45:K1 (strain S88 / ExPEC).